The primary structure comprises 96 residues: Large ribosomal subunit protein bL25 (96 aa).

Belongs to the bacterial ribosomal protein bL25 family. As to quaternary structure, part of the 50S ribosomal subunit; part of the 5S rRNA/L5/L18/L25 subcomplex. Contacts the 5S rRNA. Binds to the 5S rRNA independently of L5 and L18.

In terms of biological role, this is one of the proteins that binds to the 5S RNA in the ribosome where it forms part of the central protuberance. The chain is Large ribosomal subunit protein bL25 from Francisella tularensis subsp. tularensis (strain FSC 198).